A 285-amino-acid polypeptide reads, in one-letter code: GPN-loop GTPase 3 (285 aa).

13–18 (GSGKST) contributes to the GTP binding site. Residues 72-74 (GPN) carry the Gly-Pro-Asn (GPN)-loop; involved in dimer interface motif. 174–177 (TKMD) lines the GTP pocket. Residues 262-285 (EPKEVDEEPSNSNFDAFFQDTADS) form a disordered region.

Belongs to the GPN-loop GTPase family. Heterodimer with gpn1. Binds to RNA polymerase II (RNAPII).

In terms of biological role, small GTPase required for proper localization of RNA polymerase II (RNAPII). May act at an RNAP assembly step prior to nuclear import. This chain is GPN-loop GTPase 3, found in Danio rerio (Zebrafish).